Consider the following 268-residue polypeptide: Imidazole glycerol phosphate synthase subunit HisF (268 aa).

Residues Asp-12 and Asp-131 contribute to the active site.

It belongs to the HisA/HisF family. As to quaternary structure, heterodimer of HisH and HisF.

The protein resides in the cytoplasm. The catalysed reaction is 5-[(5-phospho-1-deoxy-D-ribulos-1-ylimino)methylamino]-1-(5-phospho-beta-D-ribosyl)imidazole-4-carboxamide + L-glutamine = D-erythro-1-(imidazol-4-yl)glycerol 3-phosphate + 5-amino-1-(5-phospho-beta-D-ribosyl)imidazole-4-carboxamide + L-glutamate + H(+). Its pathway is amino-acid biosynthesis; L-histidine biosynthesis; L-histidine from 5-phospho-alpha-D-ribose 1-diphosphate: step 5/9. Its function is as follows. IGPS catalyzes the conversion of PRFAR and glutamine to IGP, AICAR and glutamate. The HisF subunit catalyzes the cyclization activity that produces IGP and AICAR from PRFAR using the ammonia provided by the HisH subunit. The sequence is that of Imidazole glycerol phosphate synthase subunit HisF from Methanoculleus marisnigri (strain ATCC 35101 / DSM 1498 / JR1).